A 332-amino-acid polypeptide reads, in one-letter code: Ketol-acid reductoisomerase (NADP(+)) (332 aa).

Residues 4 to 184 (ARMYYDEDAD…GGTRAGILET (181 aa)) enclose the KARI N-terminal Rossmann domain. NADP(+)-binding positions include 27 to 30 (YGSQ), S53, S55, and 85 to 88 (DEVQ). Residue H110 is part of the active site. G136 serves as a coordination point for NADP(+). One can recognise a KARI C-terminal knotted domain in the interval 185 to 330 (TFREEAETDL…ADLRKMMSWL (146 aa)). Residues D193, E197, E229, and E233 each contribute to the Mg(2+) site. A substrate-binding site is contributed by S254.

It belongs to the ketol-acid reductoisomerase family. The cofactor is Mg(2+).

It catalyses the reaction (2R)-2,3-dihydroxy-3-methylbutanoate + NADP(+) = (2S)-2-acetolactate + NADPH + H(+). The enzyme catalyses (2R,3R)-2,3-dihydroxy-3-methylpentanoate + NADP(+) = (S)-2-ethyl-2-hydroxy-3-oxobutanoate + NADPH + H(+). The protein operates within amino-acid biosynthesis; L-isoleucine biosynthesis; L-isoleucine from 2-oxobutanoate: step 2/4. Its pathway is amino-acid biosynthesis; L-valine biosynthesis; L-valine from pyruvate: step 2/4. In terms of biological role, involved in the biosynthesis of branched-chain amino acids (BCAA). Catalyzes an alkyl-migration followed by a ketol-acid reduction of (S)-2-acetolactate (S2AL) to yield (R)-2,3-dihydroxy-isovalerate. In the isomerase reaction, S2AL is rearranged via a Mg-dependent methyl migration to produce 3-hydroxy-3-methyl-2-ketobutyrate (HMKB). In the reductase reaction, this 2-ketoacid undergoes a metal-dependent reduction by NADPH to yield (R)-2,3-dihydroxy-isovalerate. The chain is Ketol-acid reductoisomerase (NADP(+)) from Gloeobacter violaceus (strain ATCC 29082 / PCC 7421).